Reading from the N-terminus, the 218-residue chain is Large ribosomal subunit protein uL3 (218 aa).

It belongs to the universal ribosomal protein uL3 family. In terms of assembly, part of the 50S ribosomal subunit. Forms a cluster with proteins L14 and L19.

In terms of biological role, one of the primary rRNA binding proteins, it binds directly near the 3'-end of the 23S rRNA, where it nucleates assembly of the 50S subunit. This Corynebacterium aurimucosum (strain ATCC 700975 / DSM 44827 / CIP 107346 / CN-1) (Corynebacterium nigricans) protein is Large ribosomal subunit protein uL3.